The sequence spans 91 residues: MWHSVGLTLLVFVATLLIVLLLMVCGWYFVWHLFLSKFKFLRELVGDTGSQEGDHEPSGSETEEDTSSSPHRIRSARQRRAPADEGHRPLT.

Residues 10–30 (LVFVATLLIVLLLMVCGWYFV) form a helical membrane-spanning segment. Residues 47-91 (DTGSQEGDHEPSGSETEEDTSSSPHRIRSARQRRAPADEGHRPLT) form a disordered region. Phosphoserine occurs at positions 58 and 60. Residue Thr62 is modified to Phosphothreonine. Position 69 is a phosphoserine (Ser69). Over residues 71-80 (HRIRSARQRR) the composition is skewed to basic residues. Residues 81-91 (APADEGHRPLT) are compositionally biased toward basic and acidic residues.

Belongs to the SMIM13 family.

It is found in the membrane. The protein is Small integral membrane protein 13 (SMIM13) of Homo sapiens (Human).